The sequence spans 334 residues: Protein-methionine-sulfoxide reductase catalytic subunit MsrP (334 aa).

Residues 1–44 (MKKNQFLKESDVTAESVFFMKRRQVLKALGISAAALSLPHAAHA) constitute a signal peptide (tat-type signal). Mo-molybdopterin-binding positions include asparagine 88, 91 to 92 (YE), cysteine 146, threonine 181, asparagine 233, arginine 238, and 249 to 251 (GIK).

Belongs to the MsrP family. As to quaternary structure, heterodimer of a catalytic subunit (MsrP) and a heme-binding subunit (MsrQ). It depends on Mo-molybdopterin as a cofactor. Predicted to be exported by the Tat system. The position of the signal peptide cleavage has not been experimentally proven.

Its subcellular location is the periplasm. The catalysed reaction is L-methionyl-[protein] + a quinone + H2O = L-methionyl-(S)-S-oxide-[protein] + a quinol. The enzyme catalyses L-methionyl-[protein] + a quinone + H2O = L-methionyl-(R)-S-oxide-[protein] + a quinol. Its function is as follows. Part of the MsrPQ system that repairs oxidized periplasmic proteins containing methionine sulfoxide residues (Met-O), using respiratory chain electrons. Thus protects these proteins from oxidative-stress damage caused by reactive species of oxygen and chlorine generated by the host defense mechanisms. MsrPQ is essential for the maintenance of envelope integrity under bleach stress, rescuing a wide series of structurally unrelated periplasmic proteins from methionine oxidation, including the primary periplasmic chaperone SurA and the lipoprotein Pal. The catalytic subunit MsrP is non-stereospecific, being able to reduce both (R-) and (S-) diastereoisomers of methionine sulfoxide. In Escherichia coli (strain UTI89 / UPEC), this protein is Protein-methionine-sulfoxide reductase catalytic subunit MsrP.